The chain runs to 245 residues: Nicotinamide/nicotinic acid mononucleotide adenylyltransferase 3 (245 aa).

NAD(+)-binding residues include serine 14 and phenylalanine 15. Residues histidine 22 and lysine 56 each contribute to the ATP site. Residues tryptophan 90, threonine 93, glycine 134, and aspartate 136 each coordinate NAD(+). Lysine 139 contacts ATP. Leucine 146, tryptophan 147, arginine 166, and asparagine 197 together coordinate NAD(+). Threonine 202–arginine 205 provides a ligand contact to ATP.

Belongs to the eukaryotic NMN adenylyltransferase family. In terms of assembly, homotetramer. It depends on Mg(2+) as a cofactor.

The protein resides in the mitochondrion. The enzyme catalyses beta-nicotinamide D-ribonucleotide + ATP + H(+) = diphosphate + NAD(+). It carries out the reaction nicotinate beta-D-ribonucleotide + ATP + H(+) = deamido-NAD(+) + diphosphate. Its pathway is cofactor biosynthesis; NAD(+) biosynthesis; NAD(+) from nicotinamide D-ribonucleotide: step 1/1. It functions in the pathway cofactor biosynthesis; NAD(+) biosynthesis; deamido-NAD(+) from nicotinate D-ribonucleotide: step 1/1. Its activity is regulated as follows. Activity is strongly inhibited by galotannin. Inhibited by P1-(adenosine-5')-P4-(nicotinic-acid-riboside-5')-tetraphosphate (Nap4AD). Its function is as follows. Catalyzes the formation of NAD(+) from nicotinamide mononucleotide (NMN) and ATP. Can also use the deamidated form; nicotinic acid mononucleotide (NaMN) as substrate with the same efficiency. Can use triazofurin monophosphate (TrMP) as substrate. Can also use GTP and ITP as nucleotide donors. Also catalyzes the reverse reaction, i.e. the pyrophosphorolytic cleavage of NAD(+). For the pyrophosphorolytic activity, can use NAD(+), NADH, NaAD, nicotinic acid adenine dinucleotide phosphate (NHD), nicotinamide guanine dinucleotide (NGD) as substrates. Fails to cleave phosphorylated dinucleotides NADP(+), NADPH and NaADP(+). Protects against axonal degeneration following injury. May be involved in the maintenance of axonal integrity. Also functions as a stress-response chaperone protein that prevents toxic aggregation of proteins; this function may be independent of its NAD(+) synthesis activity. The chain is Nicotinamide/nicotinic acid mononucleotide adenylyltransferase 3 from Mus musculus (Mouse).